We begin with the raw amino-acid sequence, 196 residues long: ATP-dependent Clp protease proteolytic subunit (196 aa).

Ser-101 acts as the Nucleophile in catalysis. His-126 is a catalytic residue.

Belongs to the peptidase S14 family. In terms of assembly, component of the chloroplastic Clp protease core complex.

The protein localises to the plastid. It is found in the chloroplast stroma. It carries out the reaction Hydrolysis of proteins to small peptides in the presence of ATP and magnesium. alpha-casein is the usual test substrate. In the absence of ATP, only oligopeptides shorter than five residues are hydrolyzed (such as succinyl-Leu-Tyr-|-NHMec, and Leu-Tyr-Leu-|-Tyr-Trp, in which cleavage of the -Tyr-|-Leu- and -Tyr-|-Trp bonds also occurs).. In terms of biological role, cleaves peptides in various proteins in a process that requires ATP hydrolysis. Has a chymotrypsin-like activity. Plays a major role in the degradation of misfolded proteins. The chain is ATP-dependent Clp protease proteolytic subunit from Gossypium hirsutum (Upland cotton).